The sequence spans 511 residues: MVVGILIGIIILGVVGFIQYTLIQKASKNRVESLEKEASLTLEEAKREAESTKKEAILEAKEEVHKLRADLDKETRDRRNEIQRFERRLIQREESLDKKGEMLEKREDSINKKSIEIQELEERVQNLYGEQRAELERISNLSSEDARTLLLDEVRREIKHESAMLIKELETKAKEEADKKSREIITTAIQRCAADHVSETTVHVVALPNDEMKGRIIGREGRNIRTLETLTGVDLIIDDTPEAVILSSFDPIRREVARIALEKLIVDGRIHPARIEEMVERAIKDVENDIKEEGEQATFETGVHGLHPEIIKLLGRLKYRTSYGQNVLKHSIEVSYLAGLMASELGLDVNLARRAGLLHDIGKGVDQEYEGPHAVIGGELAKKYHESPAVVNAIAAHHGDTEMQTLEAVLVQAADAISAARPGARRETLEAYIKRLEKLEEIATSYEGVEKSYAIQAGREIRIMVKPDQVDDAGAIEMARNIVKKIEEQLEYPGQIKINVIRETRAVDYAK.

Residues 3 to 23 (VGILIGIIILGVVGFIQYTLI) traverse the membrane as a helical segment. Positions 201–286 (TVHVVALPND…EMVERAIKDV (86 aa)) constitute a KH domain. The region spanning 327 to 420 (VLKHSIEVSY…VQAADAISAA (94 aa)) is the HD domain.

It belongs to the RNase Y family.

The protein localises to the cell membrane. Its function is as follows. Endoribonuclease that initiates mRNA decay. The polypeptide is Ribonuclease Y (Clostridium perfringens (strain ATCC 13124 / DSM 756 / JCM 1290 / NCIMB 6125 / NCTC 8237 / Type A)).